The sequence spans 85 residues: uncharacterized protein (85 aa).

This is an uncharacterized protein from Methanocaldococcus jannaschii (strain ATCC 43067 / DSM 2661 / JAL-1 / JCM 10045 / NBRC 100440) (Methanococcus jannaschii).